Reading from the N-terminus, the 314-residue chain is 2,3-dihydroxyphenylpropionate/2,3-dihydroxicinnamic acid 1,2-dioxygenase (314 aa).

His-115 acts as the Proton donor in catalysis. Catalysis depends on His-179, which acts as the Proton acceptor.

The protein belongs to the LigB/MhpB extradiol dioxygenase family. In terms of assembly, homotetramer. Fe(2+) serves as cofactor.

It catalyses the reaction 3-(2,3-dihydroxyphenyl)propanoate + O2 = (2Z,4E)-2-hydroxy-6-oxonona-2,4-dienedioate + H(+). It carries out the reaction (2E)-3-(2,3-dihydroxyphenyl)prop-2-enoate + O2 = (2Z,4E,7E)-2-hydroxy-6-oxonona-2,4,7-trienedioate + H(+). The protein operates within aromatic compound metabolism; 3-phenylpropanoate degradation. Its function is as follows. Catalyzes the non-heme iron(II)-dependent oxidative cleavage of 2,3-dihydroxyphenylpropionic acid and 2,3-dihydroxicinnamic acid into 2-hydroxy-6-ketononadienedioate and 2-hydroxy-6-ketononatrienedioate, respectively. This chain is 2,3-dihydroxyphenylpropionate/2,3-dihydroxicinnamic acid 1,2-dioxygenase, found in Escherichia coli O157:H7.